The sequence spans 649 residues: FAS-associated factor 1 (649 aa).

Residues 1–57 (MASNMDREMILADFQACTGIENIDEAITLLEQNNWDLVAAINGVIPQENGILQSDFG) enclose the UBA domain. Disordered stretches follow at residues 56 to 84 (FGGE…SAFR) and 266 to 290 (RRTS…VSDS). Residues 68 to 82 (PASHPAPASTPSSSA) show a composition bias toward low complexity. The residue at position 319 (Ser-319) is a Phosphoserine. Positions 568–645 (NAEPVSKLRI…NLFPQETLFL (78 aa)) constitute a UBX domain. Phosphothreonine is present on Thr-579. Ser-581 bears the Phosphoserine mark.

As to quaternary structure, interacts with CDT1 and ATPase VCP/p97. Interacts (via UBA domain) with FAS (via death domain). Interacts (via UBA domain) with NLRP12 (via DAPIN/PYRIN domain).

It localises to the nucleus. Ubiquitin-binding protein. Required for the progression of DNA replication forks by targeting DNA replication licensing factor CDT1 for degradation. Potentiates but cannot initiate FAS-induced apoptosis. This chain is FAS-associated factor 1 (Faf1), found in Mus musculus (Mouse).